A 337-amino-acid polypeptide reads, in one-letter code: Phosphate acyltransferase (337 aa).

It belongs to the PlsX family. Homodimer. Probably interacts with PlsY.

The protein localises to the cytoplasm. It carries out the reaction a fatty acyl-[ACP] + phosphate = an acyl phosphate + holo-[ACP]. Its pathway is lipid metabolism; phospholipid metabolism. Functionally, catalyzes the reversible formation of acyl-phosphate (acyl-PO(4)) from acyl-[acyl-carrier-protein] (acyl-ACP). This enzyme utilizes acyl-ACP as fatty acyl donor, but not acyl-CoA. This chain is Phosphate acyltransferase, found in Polynucleobacter necessarius subsp. necessarius (strain STIR1).